The chain runs to 269 residues: Regulatory protein RecX (269 aa).

The protein belongs to the RecX family.

It is found in the cytoplasm. Its function is as follows. Modulates RecA activity. This is Regulatory protein RecX from Lactococcus lactis subsp. cremoris (strain MG1363).